The chain runs to 123 residues: MAKETNLVRRVSVKAANKNIQSFNSGDTVNVFVKVKEGEKERVQLYKGIVTKIQGSGAAKSFTVRKMSAGVGVERTFPFASPALDKVEIVNVGKVRRSKLYYLRALKGKAAKIESELVSSKAE.

Belongs to the bacterial ribosomal protein bL19 family.

Its function is as follows. This protein is located at the 30S-50S ribosomal subunit interface and may play a role in the structure and function of the aminoacyl-tRNA binding site. The sequence is that of Large ribosomal subunit protein bL19 from Bdellovibrio bacteriovorus (strain ATCC 15356 / DSM 50701 / NCIMB 9529 / HD100).